The chain runs to 95 residues: Large ribosomal subunit protein uL23 (95 aa).

The protein belongs to the universal ribosomal protein uL23 family. In terms of assembly, part of the 50S ribosomal subunit. Contacts protein L29, and trigger factor when it is bound to the ribosome.

Functionally, one of the early assembly proteins it binds 23S rRNA. One of the proteins that surrounds the polypeptide exit tunnel on the outside of the ribosome. Forms the main docking site for trigger factor binding to the ribosome. The protein is Large ribosomal subunit protein uL23 of Desulforapulum autotrophicum (strain ATCC 43914 / DSM 3382 / VKM B-1955 / HRM2) (Desulfobacterium autotrophicum).